Reading from the N-terminus, the 524-residue chain is Ribonuclease Y (524 aa).

A helical transmembrane segment spans residues 2–22 (GIVINLFLIIAASIVFFVVGF). Residues 214–299 (ALSVVHIQSD…KAYQDAKKEI (86 aa)) form the KH domain. An HD domain is found at 340–432 (LLQHSREVAM…VDAANIVSLS (93 aa)).

It belongs to the RNase Y family.

Its subcellular location is the cell membrane. In terms of biological role, endoribonuclease that initiates mRNA decay. This Chlorobaculum tepidum (strain ATCC 49652 / DSM 12025 / NBRC 103806 / TLS) (Chlorobium tepidum) protein is Ribonuclease Y.